The primary structure comprises 415 residues: Camphor 5-monooxygenase (415 aa).

Position 358 (Cys-358) interacts with heme.

It belongs to the cytochrome P450 family. It depends on heme as a cofactor.

It is found in the cytoplasm. The enzyme catalyses 2 reduced [2Fe-2S]-[putidaredoxin] + (1R,4R)-camphor + O2 + 2 H(+) = (1R,4R,5R)-5-hydroxycamphor + 2 oxidized [2Fe-2S]-[putidaredoxin] + H2O. It functions in the pathway terpene metabolism; (R)-camphor degradation. In terms of biological role, involved in a camphor oxidation system. The polypeptide is Camphor 5-monooxygenase (camC) (Pseudomonas putida (Arthrobacter siderocapsulatus)).